Here is a 181-residue protein sequence, read N- to C-terminus: Protein GrpE (181 aa).

The protein belongs to the GrpE family. In terms of assembly, homodimer.

The protein resides in the cytoplasm. In terms of biological role, participates actively in the response to hyperosmotic and heat shock by preventing the aggregation of stress-denatured proteins, in association with DnaK and GrpE. It is the nucleotide exchange factor for DnaK and may function as a thermosensor. Unfolded proteins bind initially to DnaJ; upon interaction with the DnaJ-bound protein, DnaK hydrolyzes its bound ATP, resulting in the formation of a stable complex. GrpE releases ADP from DnaK; ATP binding to DnaK triggers the release of the substrate protein, thus completing the reaction cycle. Several rounds of ATP-dependent interactions between DnaJ, DnaK and GrpE are required for fully efficient folding. This is Protein GrpE from Verminephrobacter eiseniae (strain EF01-2).